Reading from the N-terminus, the 294-residue chain is 4-hydroxy-tetrahydrodipicolinate synthase (294 aa).

Threonine 45 provides a ligand contact to pyruvate. The active-site Proton donor/acceptor is tyrosine 133. The Schiff-base intermediate with substrate role is filled by lysine 161. Isoleucine 203 contributes to the pyruvate binding site.

This sequence belongs to the DapA family. Homotetramer; dimer of dimers.

Its subcellular location is the cytoplasm. It carries out the reaction L-aspartate 4-semialdehyde + pyruvate = (2S,4S)-4-hydroxy-2,3,4,5-tetrahydrodipicolinate + H2O + H(+). The protein operates within amino-acid biosynthesis; L-lysine biosynthesis via DAP pathway; (S)-tetrahydrodipicolinate from L-aspartate: step 3/4. Catalyzes the condensation of (S)-aspartate-beta-semialdehyde [(S)-ASA] and pyruvate to 4-hydroxy-tetrahydrodipicolinate (HTPA). This chain is 4-hydroxy-tetrahydrodipicolinate synthase, found in Shewanella sp. (strain W3-18-1).